Reading from the N-terminus, the 208-residue chain is Uracil phosphoribosyltransferase (208 aa).

Residues arginine 78, arginine 103, and 130-138 (DPMLATGGS) each bind 5-phospho-alpha-D-ribose 1-diphosphate. Uracil is bound by residues isoleucine 193 and 198–200 (GDA). Aspartate 199 lines the 5-phospho-alpha-D-ribose 1-diphosphate pocket.

This sequence belongs to the UPRTase family. Requires Mg(2+) as cofactor.

The catalysed reaction is UMP + diphosphate = 5-phospho-alpha-D-ribose 1-diphosphate + uracil. Its pathway is pyrimidine metabolism; UMP biosynthesis via salvage pathway; UMP from uracil: step 1/1. Its activity is regulated as follows. Allosterically activated by GTP. Its function is as follows. Catalyzes the conversion of uracil and 5-phospho-alpha-D-ribose 1-diphosphate (PRPP) to UMP and diphosphate. The sequence is that of Uracil phosphoribosyltransferase from Tolumonas auensis (strain DSM 9187 / NBRC 110442 / TA 4).